The sequence spans 126 residues: Aspartate 1-decarboxylase (126 aa).

Catalysis depends on Ser25, which acts as the Schiff-base intermediate with substrate; via pyruvic acid. Ser25 bears the Pyruvic acid (Ser) mark. A substrate-binding site is contributed by Thr57. Tyr58 (proton donor) is an active-site residue. 73–75 (GAA) provides a ligand contact to substrate.

It belongs to the PanD family. Heterooctamer of four alpha and four beta subunits. Pyruvate is required as a cofactor. Post-translationally, is synthesized initially as an inactive proenzyme, which is activated by self-cleavage at a specific serine bond to produce a beta-subunit with a hydroxyl group at its C-terminus and an alpha-subunit with a pyruvoyl group at its N-terminus.

The protein resides in the cytoplasm. It catalyses the reaction L-aspartate + H(+) = beta-alanine + CO2. It functions in the pathway cofactor biosynthesis; (R)-pantothenate biosynthesis; beta-alanine from L-aspartate: step 1/1. Functionally, catalyzes the pyruvoyl-dependent decarboxylation of aspartate to produce beta-alanine. The sequence is that of Aspartate 1-decarboxylase from Serratia proteamaculans (strain 568).